The primary structure comprises 410 residues: Metacaspase-1 (410 aa).

Residues 1 to 94 are disordered; it reads MFPGSGRQTY…RQSGAMNDVS (94 aa). 2 stretches are compositionally biased toward low complexity: residues 21–47 and 55–64; these read APQYNYGPPQGPPQGYYNGPPQGYNGP and NYNYGHYGPP. The segment covering 65 to 75 has biased composition (gly residues); sequence QGQGQGYGQGG. Polar residues predominate over residues 80–94; sequence MYNNNRQSGAMNDVS. Catalysis depends on residues histidine 200 and cysteine 256.

It belongs to the peptidase C14B family.

In terms of biological role, involved in cell death (apoptosis). The sequence is that of Metacaspase-1 (MCA1) from Meyerozyma guilliermondii (strain ATCC 6260 / CBS 566 / DSM 6381 / JCM 1539 / NBRC 10279 / NRRL Y-324) (Yeast).